A 511-amino-acid polypeptide reads, in one-letter code: Histidine ammonia-lyase (511 aa).

Positions 143–145 (ASG) form a cross-link, 5-imidazolinone (Ala-Gly). Serine 144 carries the post-translational modification 2,3-didehydroalanine (Ser).

Belongs to the PAL/histidase family. Contains an active site 4-methylidene-imidazol-5-one (MIO), which is formed autocatalytically by cyclization and dehydration of residues Ala-Ser-Gly.

It localises to the cytoplasm. It catalyses the reaction L-histidine = trans-urocanate + NH4(+). Its pathway is amino-acid degradation; L-histidine degradation into L-glutamate; N-formimidoyl-L-glutamate from L-histidine: step 1/3. The chain is Histidine ammonia-lyase from Idiomarina loihiensis (strain ATCC BAA-735 / DSM 15497 / L2-TR).